A 255-amino-acid chain; its full sequence is 7alpha-hydroxysteroid dehydrogenase (255 aa).

NAD(+) contacts are provided by residues isoleucine 23, 42 to 43 (DI), 68 to 69 (DI), and asparagine 95. The glycochenodeoxycholate site is built by glycine 99, serine 146, asparagine 151, and tyrosine 159. Residues tyrosine 159, lysine 163, and 192–194 (ILT) contribute to the NAD(+) site. Tyrosine 159 functions as the Proton acceptor in the catalytic mechanism.

It belongs to the short-chain dehydrogenases/reductases (SDR) family. Homotetramer.

The catalysed reaction is cholate + NAD(+) = 3alpha,12alpha-dihydroxy-7-oxo-5beta-cholanate + NADH + H(+). It carries out the reaction chenodeoxycholate + NAD(+) = 7-oxolithocholate + NADH + H(+). It catalyses the reaction taurochenodeoxycholate + NAD(+) = 7-oxotaurolithocholate + NADH + H(+). The enzyme catalyses taurocholate + NAD(+) = 7-oxo-taurodeoxycholate + NADH + H(+). The catalysed reaction is glycocholate + NAD(+) = 7-oxo-glycodeoxycholate + NADH + H(+). It carries out the reaction glycochenodeoxycholate + NAD(+) = 7-oxoglycolithocholate + NADH + H(+). Functionally, 7alpha-hydroxysteroid dehydrogenase involved in the metabolism of bile acids. Catalyzes the NAD(+)-dependent oxidation of the 7alpha-hydroxy group of 7alpha-hydroxysteroids, such as the major human bile acids cholate and chenodeoxycholate, to the corresponding 7-oxosteroids. To a lesser extent, can also act on taurochenodeoxycholate, taurocholate and glycocholate. Can also use glycochenodeoxycholate as substrate. Is not able to use NADP(+) instead of NAD(+) as the electron acceptor. The polypeptide is 7alpha-hydroxysteroid dehydrogenase (hdhA) (Escherichia coli O157:H7).